The sequence spans 1755 residues: MESQQLSNYPNISHGSACASVTSKEVHTNQDPLDVSASKIQEYDKASTKANSQQTTTPASSAVPENLHHASPQPASVPPPQNGPYPQQCMMTQNQANPSGWSFYGHPSMIPYTPYQMSPMYFPPGPQSQFPQYPSSVGTPLSTPSPESGNTFTDSSSADSDMTSTKKYVRPPPMLTSPNDFPNWVKTYIKFLQNSNLGGIIPTVNGKPVRQITDDELTFLYNTFQIFAPSQFLPTWVKDILSVDYTDIMKILSKSIEKMQSDTQEANDIVTLANLQYNGSTPADAFETKVTNIIDRLNNNGIHINNKVACQLIMRGLSGEYKFLRYTRHRHLNMTVAELFLDIHAIYEEQQGSRNSKPNYRRNPSDEKNDSRSYTNTTKPKVIARNPQKTNNSKSKTARAHNVSTSNNSPSTDNDSISKSTTEPIQLNNKHDLHLGQKLTESTVNHTNHSDDELPGHLLLDSGASRTLIRSAHHIHSASSNPDINVVDAQKRNIPINAIGDLQFHFQDNTKTSIKVLHTPNIAYDLLSLNELAAVDITACFTKNVLERSDGTVLAPIVKYGDFYWVSKKYLLPSNISVPTINNVHTSESTRKYPYPFIHRMLAHANAQTIRYSLKNNTITYFNESDVDWSSAIDYQCPDCLIGKSTKHRHIKGSRLKYQNSYEPFQYLHTDIFGPVHNLPKSAPSYFISFTDETTKFRWVYPLHDRREDSILDVFTTILAFIKNQFQASVLVIQMDRGSEYTNRTLHKFLEKNGITPCYTTTADSRAHGVAERLNRTLLDDCRTQLQCSGLPNHLWFSAIEFSTIVRNSLASPKSKKSARQHAGLAGLDISTLLPFGQPVIVNDHNPNSKIHPRGIPGYALHPSRNSYGYIIYLPSLKKTVDTTNYVILQGKESRLDQFNYDALTFDEDLNRLTASYQSFIASNEIQQSDDLNIESDHDFQSDIELHPEQPRNVLSKAVSPTDSTPPSTHTEDSKRVSKTNIRAPREVDPNISESNILPSKKRSSTPQISNIESTGSGGMHKLNVPLLAPMSQSNTHESSHASKSKDFRHSDSYSENETNHTNVPISSTGGTNNKTVPQISDQETEKRIIHRSPSIDASPPENNSSHNIVPIKTPTTVSEQNTEESIIADLPLPDLPPESPTEFPDPFKELPPINSHQTNSSLGGIGDSNAYTTINSKKRSLEDNETEIKVSRDTWNTKNMRSLEPPRSKKRIHLIAAVKAVKSIKPIRTTLRYDEAITYNKDIKEKEKYIEAYHKEVNQLLKMNTWDTDKYYDRKEIDPKRVINSMFIFNRKRDGTHKARFVARGDIQHPDTYDSGMQSNTVHHYALMTSLSLALDNNYYITQLDISSAYLYADIKEELYIRPPPHLGMNDKLIRLKKSLYGLKQSGANWYETIKSYLIKQCGMEEVRGWSCVFKNSQVTICLFVDDMILFSKDLNANKKIITTLKKQYDTKIINLGESDNEIQYDILGLEIKYQRGKYMKLGMENSLTEKIPKLNVPLNPKGRKLSAPGQPGLYIDQDELEIDEDEYKEKVHEMQKLIGLASYVGYKFRFDLLYYINTLAQHILFPSRQVLDMTYELIQFMWDTRDKQLIWHKNKPTEPDNKLVAISDASYGNQPYYKSQIGNIYLLNGKVIGGKSTKASLTCTSTTEAEIHAISESVPLLNNLSHLVQELNKKPITKGLLTDSKSTISIIISNNEEKFRNRFFGTKAMRLRDEVSGNHLHVCYIETKKNIADVMTKPLPIKTFKLLTNKWIH.

Composition is skewed to polar residues over residues 1–23 (MESQQLSNYPNISHGSACASVTS), 48–60 (TKANSQQTTTPAS), and 127–152 (QSQFPQYPSSVGTPLSTPSPESGNTF). 3 disordered regions span residues 1–88 (MESQ…YPQQ), 126–173 (PQSQ…RPPP), and 352–421 (GSRN…SKST). The span at 153–165 (TDSSSADSDMTST) shows a compositional bias: low complexity. Residues 299–401 (NNGIHINNKV…NSKSKTARAH (103 aa)) form an RNA-binding region. Residues 402-418 (NVSTSNNSPSTDNDSIS) are compositionally biased toward low complexity. The For protease activity; shared with dimeric partner role is filled by Asp461. Residues 583–640 (NVHTSESTRKYPYPFIHRMLAHANAQTIRYSLKNNTITYFNESDVDWSSAIDYQCPDC) form an integrase-type zinc finger-like region. Residues 660 to 835 (NSYEPFQYLH…AGLDISTLLP (176 aa)) enclose the Integrase catalytic domain. Residues Asp671 and Asp736 each coordinate Mg(2+). 3 disordered regions span residues 956-1087 (SKAV…ETEK), 1092-1111 (RSPSIDASPPENNSSHNIVP), and 1130-1171 (DLPL…DSNA). Low complexity predominate over residues 960 to 969 (SPTDSTPPST). Over residues 1005-1015 (STPQISNIEST) the composition is skewed to polar residues. Residues 1038-1053 (ESSHASKSKDFRHSDS) show a composition bias toward basic and acidic residues. Composition is skewed to polar residues over residues 1054-1082 (YSENETNHTNVPISSTGGTNNKTVPQISD) and 1101-1111 (PENNSSHNIVP). The Bipartite nuclear localization signal signature appears at 1178–1212 (KKRSLEDNETEIKVSRDTWNTKNMRSLEPPRSKKR). Residues 1338-1476 (NNYYITQLDI…DILGLEIKYQ (139 aa)) enclose the Reverse transcriptase Ty1/copia-type domain. Mg(2+)-binding residues include Asp1346, Asp1427, Asp1428, Asp1610, Glu1652, and Asp1685. One can recognise an RNase H Ty1/copia-type domain in the interval 1610 to 1752 (DASYGNQPYY…IKTFKLLTNK (143 aa)).

In terms of assembly, the capsid protein forms a homotrimer, from which the VLPs are assembled. The protease is a homodimer, whose active site consists of two apposed aspartic acid residues. Initially, virus-like particles (VLPs) are composed of the structural unprocessed proteins Gag and Gag-Pol, and also contain the host initiator methionine tRNA (tRNA(i)-Met) which serves as a primer for minus-strand DNA synthesis, and a dimer of genomic Ty RNA. Processing of the polyproteins occurs within the particle and proceeds by an ordered pathway, called maturation. First, the protease (PR) is released by autocatalytic cleavage of the Gag-Pol polyprotein yielding capsid protein p45 and a Pol-p154 precursor protein. This cleavage is a prerequisite for subsequent processing of Pol-p154 at the remaining sites to release the mature structural and catalytic proteins. Maturation takes place prior to the RT reaction and is required to produce transposition-competent VLPs.

The protein localises to the cytoplasm. It localises to the nucleus. It catalyses the reaction DNA(n) + a 2'-deoxyribonucleoside 5'-triphosphate = DNA(n+1) + diphosphate. The enzyme catalyses Endonucleolytic cleavage to 5'-phosphomonoester.. In terms of biological role, capsid protein (CA) is the structural component of the virus-like particle (VLP), forming the shell that encapsulates the retrotransposons dimeric RNA genome. The particles are assembled from trimer-clustered units and there are holes in the capsid shells that allow for the diffusion of macromolecules. CA also has nucleocapsid-like chaperone activity, promoting primer tRNA(i)-Met annealing to the multipartite primer-binding site (PBS), dimerization of Ty1 RNA and initiation of reverse transcription. Its function is as follows. The aspartyl protease (PR) mediates the proteolytic cleavages of the Gag and Gag-Pol polyproteins after assembly of the VLP. Reverse transcriptase/ribonuclease H (RT) is a multifunctional enzyme that catalyzes the conversion of the retro-elements RNA genome into dsDNA within the VLP. The enzyme displays a DNA polymerase activity that can copy either DNA or RNA templates, and a ribonuclease H (RNase H) activity that cleaves the RNA strand of RNA-DNA heteroduplexes during plus-strand synthesis and hydrolyzes RNA primers. The conversion leads to a linear dsDNA copy of the retrotransposon that includes long terminal repeats (LTRs) at both ends. Functionally, integrase (IN) targets the VLP to the nucleus, where a subparticle preintegration complex (PIC) containing at least integrase and the newly synthesized dsDNA copy of the retrotransposon must transit the nuclear membrane. Once in the nucleus, integrase performs the integration of the dsDNA into the host genome. The protein is Transposon Ty1-ML1 Gag-Pol polyprotein (TY1B-ML1) of Saccharomyces cerevisiae (strain ATCC 204508 / S288c) (Baker's yeast).